We begin with the raw amino-acid sequence, 209 residues long: Uracil phosphoribosyltransferase (209 aa).

5-phospho-alpha-D-ribose 1-diphosphate is bound by residues arginine 79, arginine 104, and 131–139; that span reads DPMLATGGS. Residues isoleucine 194 and 199 to 201 contribute to the uracil site; that span reads GDA. A 5-phospho-alpha-D-ribose 1-diphosphate-binding site is contributed by aspartate 200.

Belongs to the UPRTase family. Mg(2+) is required as a cofactor.

The catalysed reaction is UMP + diphosphate = 5-phospho-alpha-D-ribose 1-diphosphate + uracil. It functions in the pathway pyrimidine metabolism; UMP biosynthesis via salvage pathway; UMP from uracil: step 1/1. Allosterically activated by GTP. Its function is as follows. Catalyzes the conversion of uracil and 5-phospho-alpha-D-ribose 1-diphosphate (PRPP) to UMP and diphosphate. This is Uracil phosphoribosyltransferase from Alkaliphilus metalliredigens (strain QYMF).